A 241-amino-acid polypeptide reads, in one-letter code: Small ribosomal subunit protein bS6 (241 aa).

Residues 97-108 are compositionally biased toward basic residues; the sequence is KPKIRERNRKYT. Residues 97 to 241 form a disordered region; sequence KPKIRERNRK…YNNKKPQSSN (145 aa). Residues 109 to 118 show a composition bias toward basic and acidic residues; that stretch reads PRRDRFEKPN. Low complexity-rich tracts occupy residues 130 to 151 and 161 to 182; these read QDQQATKNQQNFQQNQQNQTSQ and DDFQQVSSNQQNFGQNQQNQSG. Over residues 189 to 202 the composition is skewed to polar residues; the sequence is RQNQENIHQNSKNH.

Belongs to the bacterial ribosomal protein bS6 family.

Its function is as follows. Binds together with bS18 to 16S ribosomal RNA. This Mesomycoplasma hyopneumoniae (strain 232) (Mycoplasma hyopneumoniae) protein is Small ribosomal subunit protein bS6.